The chain runs to 1173 residues: DNA-directed RNA polymerase subunit beta (1173 aa).

This sequence belongs to the RNA polymerase beta chain family. In terms of assembly, the RNAP catalytic core consists of 2 alpha, 1 beta, 1 beta' and 1 omega subunit. When a sigma factor is associated with the core the holoenzyme is formed, which can initiate transcription.

It carries out the reaction RNA(n) + a ribonucleoside 5'-triphosphate = RNA(n+1) + diphosphate. Functionally, DNA-dependent RNA polymerase catalyzes the transcription of DNA into RNA using the four ribonucleoside triphosphates as substrates. The chain is DNA-directed RNA polymerase subunit beta from Kosmotoga olearia (strain ATCC BAA-1733 / DSM 21960 / TBF 19.5.1).